The chain runs to 876 residues: Alanine--tRNA ligase (876 aa).

His564, His568, Cys666, and His670 together coordinate Zn(2+).

Belongs to the class-II aminoacyl-tRNA synthetase family. In terms of assembly, homotetramer. Zn(2+) serves as cofactor.

It localises to the cytoplasm. It catalyses the reaction tRNA(Ala) + L-alanine + ATP = L-alanyl-tRNA(Ala) + AMP + diphosphate. Functionally, catalyzes the attachment of alanine to tRNA(Ala) in a two-step reaction: alanine is first activated by ATP to form Ala-AMP and then transferred to the acceptor end of tRNA(Ala). Also edits incorrectly charged Ser-tRNA(Ala) and Gly-tRNA(Ala) via its editing domain. This Salmonella typhi protein is Alanine--tRNA ligase.